The primary structure comprises 288 residues: Bifunctional protein FolD (288 aa).

NADP(+)-binding positions include 166-168 and Ile-232; that span reads GAS.

The protein belongs to the tetrahydrofolate dehydrogenase/cyclohydrolase family. Homodimer.

The enzyme catalyses (6R)-5,10-methylene-5,6,7,8-tetrahydrofolate + NADP(+) = (6R)-5,10-methenyltetrahydrofolate + NADPH. It carries out the reaction (6R)-5,10-methenyltetrahydrofolate + H2O = (6R)-10-formyltetrahydrofolate + H(+). It participates in one-carbon metabolism; tetrahydrofolate interconversion. Catalyzes the oxidation of 5,10-methylenetetrahydrofolate to 5,10-methenyltetrahydrofolate and then the hydrolysis of 5,10-methenyltetrahydrofolate to 10-formyltetrahydrofolate. This is Bifunctional protein FolD from Salmonella arizonae (strain ATCC BAA-731 / CDC346-86 / RSK2980).